The following is a 259-amino-acid chain: Enkurin (259 aa).

2 disordered regions span residues 1–26 (MVAM…EPPQ) and 76–98 (PPKK…TDHP). The segment covering 76-88 (PPKKKFEWNERRK) has biased composition (basic and acidic residues). The SH3-binding signature appears at 86-92 (RRKPPVP). Residues 163-255 (KRNEEVKKAQ…VLEKHKVIYI (93 aa)) enclose the Enkurin domain. Residues 163 to 258 (KRNEEVKKAQ…KHKVIYIANK (96 aa)) form an interaction with TRPC proteins region. One can recognise an IQ domain in the interval 179–190 (IQENLRKAAMKR).

As to quaternary structure, microtubule inner protein component of sperm flagellar doublet microtubules. Binds calmodulin via its IQ domain. Interacts with TRPC1, TRPC2, TRPC5, but not TRPC3. Interacts with CFAP45. As to expression, expressed in trachea multiciliated cells.

The protein localises to the cytoplasm. The protein resides in the cytoskeleton. It is found in the flagellum axoneme. It localises to the cilium axoneme. In terms of biological role, adapter that functions to localize a calcium-sensitive signal transduction machinery in sperm to a calcium-permeable ion channel. Microtubule inner protein (MIP) part of the dynein-decorated doublet microtubules (DMTs) in cilia axoneme, which is required for motile cilia beating. This is Enkurin (ENKUR) from Bos taurus (Bovine).